We begin with the raw amino-acid sequence, 347 residues long: Protein RecA (347 aa).

67-74 (GPESSGKT) is an ATP binding site.

This sequence belongs to the RecA family.

The protein resides in the cytoplasm. In terms of biological role, can catalyze the hydrolysis of ATP in the presence of single-stranded DNA, the ATP-dependent uptake of single-stranded DNA by duplex DNA, and the ATP-dependent hybridization of homologous single-stranded DNAs. It interacts with LexA causing its activation and leading to its autocatalytic cleavage. In Helicobacter pylori (strain HPAG1), this protein is Protein RecA.